Consider the following 239-residue polypeptide: uncharacterized protein (239 aa).

Positions 104 to 127 (LPATSQSSQPKSTNSSTESSSIGQ) are disordered. Residues 107–127 (TSQSSQPKSTNSSTESSSIGQ) are compositionally biased toward low complexity. Positions 134 to 202 (ENEINLNKNK…HFIQNNQESF (69 aa)) form a coiled coil. Residues 211 to 231 (VKIGSAFIIYIFYNVLFFIIV) traverse the membrane as a helical segment.

It is found in the membrane. This is an uncharacterized protein from Dictyostelium discoideum (Social amoeba).